Reading from the N-terminus, the 1478-residue chain is ATP-binding cassette transporter abc2 (1478 aa).

Residues 1–25 are Vacuolar-facing; that stretch reads MVLEQDLDPFVGGNWMNSAYKGFTF. Residues 26–46 form a helical membrane-spanning segment; that stretch reads LSATWLAPNIYLLISGCLQYF. Residues 47 to 65 lie on the Cytoplasmic side of the membrane; the sequence is YEVRKRSHYFHFRRFWTIW. The chain crosses the membrane as a helical span at residues 66 to 85; that stretch reads LKSLVIMVLLFTHIYDCYKT. Asn-86 is a glycosylation site (N-linked (GlcNAc...) asparagine). Over 86–90 the chain is Vacuolar; it reads NESVW. Residues 91 to 104 form a helical membrane-spanning segment; that stretch reads NVLSIITYFLALFL. Residues 105-116 lie on the Cytoplasmic side of the membrane; it reads HVVEQPTLRIPM. The chain crosses the membrane as a helical span at residues 117-137; sequence ASLLMFWLFKFLASALVLLLR. The Vacuolar portion of the chain corresponds to 138 to 154; the sequence is PNYTMFPMLNVVPSITF. Asn-139 carries N-linked (GlcNAc...) asparagine glycosylation. Residues 155 to 175 traverse the membrane as a helical segment; the sequence is FCSLVCLLAEIYVPPANRVWY. At 176 to 259 the chain is on the cytoplasmic side; sequence PDDAAELEET…KKSSLYMWGV (84 aa). A helical transmembrane segment spans residues 260–280; that stretch reads LFLNHWKLTVVIIVLKLVQDV. The 290-residue stretch at 268 to 557 folds into the ABC transmembrane type-1 1 domain; the sequence is TVVIIVLKLV…LPIVVSSVLE (290 aa). Over 281–310 the chain is Vacuolar; sequence VAFIQPNLIRKIVIFVSSYSSEHPQPPQVG. The helical transmembrane segment at 311-331 threads the bilayer; sequence FSLAIAMFLTNVVQTALLQQY. Residues 332–387 are Cytoplasmic-facing; the sequence is FQLGMVLGMRWRSELITAIYRKSLRLSSAARQSRSVGDIVNYMSVDTQKVCDLTMF. The chain crosses the membrane as a helical span at residues 388–408; sequence LFVIVSGPFQIVLALTNLYHL. The Vacuolar portion of the chain corresponds to 409–411; that stretch reads VGY. Residues 412–432 traverse the membrane as a helical segment; sequence GALSGAFVTFLLFPCNVVIAS. Residues 433 to 495 lie on the Cytoplasmic side of the membrane; sequence IFKRFQNRQM…MLKKIGIVNT (63 aa). Residues 496-516 traverse the membrane as a helical segment; that stretch reads IGNFTWLFAPILVSAATFGTF. Topologically, residues 517–539 are vacuolar; the sequence is IVLYGKTRVLSVDIVFACLSLFN. The helical transmembrane segment at 540-560 threads the bilayer; sequence LLQFPLTMLPIVVSSVLEASV. Residues 561–910 are Cytoplasmic-facing; it reads AISRIYGFLT…VKWKVYWTYF (350 aa). Positions 593–821 constitute an ABC transporter 1 domain; it reads LEIKKGTFSW…PDSQLFQLLS (229 aa). 631-638 contacts ATP; the sequence is GKVGMGKS. Positions 828–867 are disordered; that stretch reads TASSTGADTPLSRSQSVITSSTDVTSSASRSSDTVSNYPK. Polar residues predominate over residues 829 to 840; it reads ASSTGADTPLSR. Phosphoserine is present on residues Ser-839, Ser-843, and Ser-863. The span at 841–863 shows a compositional bias: low complexity; the sequence is SQSVITSSTDVTSSASRSSDTVS. The chain crosses the membrane as a helical span at residues 911–931; it reads KACSLFLIFLYFLFIIGGIGM. The ABC transmembrane type-1 2 domain occupies 918–1202; sequence IFLYFLFIIG…VVRQSVDVET (285 aa). The Vacuolar segment spans residues 932–968; it reads NVGTNVWLKHWSEVNTQLGYNPKPYFYLGIYTLFGLL. The helical transmembrane segment at 969-990 threads the bilayer; the sequence is SCALISLSSLTITVFCAIKSCR. The Cytoplasmic portion of the chain corresponds to 991 to 1033; sequence YLHDSMVKAVLRAPMSFFETTPTGRILNRFSSDVYRVDEVISR. A helical transmembrane segment spans residues 1034-1054; it reads VFMFFFRNLFQIVFVLAVICY. Residue Ser-1055 is a topological domain, vacuolar. The chain crosses the membrane as a helical span at residues 1056–1076; that stretch reads SPMFMILIVPLFFLYRYNQVY. Residues 1077–1147 lie on the Cytoplasmic side of the membrane; that stretch reads YTQTSRELKR…SSNRWQAIRV (71 aa). Residues 1148–1168 form a helical membrane-spanning segment; that stretch reads EAIGALVVFSSAFFGVLSAVR. Residues 1169-1172 lie on the Vacuolar side of the membrane; it reads GNPN. A helical membrane pass occupies residues 1173 to 1193; it reads SGLVGLSLSYAVQITQSLTFV. Residues 1194–1478 lie on the Cytoplasmic side of the membrane; the sequence is VRQSVDVETN…YSLAKESGLI (285 aa). Residues 1239–1473 enclose the ABC transporter 2 domain; the sequence is IKFDHYSVRY…KASLFYSLAK (235 aa). ATP is bound at residue 1273–1280; sequence GRTGAGKS.

This sequence belongs to the ABC transporter superfamily. ABCC family. Conjugate transporter (TC 3.A.1.208) subfamily.

The protein localises to the vacuole membrane. Involved in vacuolar sequestration of glutathione S-conjugates. Together with abc4, required for accumulation of a red pigment (ade pigment) in the vacuole of a mutant affected in the adenine biosynthetic pathway. The protein is ATP-binding cassette transporter abc2 (abc2) of Schizosaccharomyces pombe (strain 972 / ATCC 24843) (Fission yeast).